The primary structure comprises 399 residues: Elongation factor Tu (399 aa).

The tr-type G domain occupies 10 to 209 (KPHVNIGTIG…AVDSYIPTPV (200 aa)). The segment at 19–26 (GHVDHGKT) is G1. A GTP-binding site is contributed by 19–26 (GHVDHGKT). Residue threonine 26 participates in Mg(2+) binding. Residues 60-64 (GITIA) form a G2 region. Residues 81–84 (DCPG) form a G3 region. GTP is bound by residues 81 to 85 (DCPGH) and 136 to 139 (NKAD). The segment at 136-139 (NKAD) is G4. Residues 174–176 (SAL) are G5.

This sequence belongs to the TRAFAC class translation factor GTPase superfamily. Classic translation factor GTPase family. EF-Tu/EF-1A subfamily. In terms of assembly, monomer.

It localises to the cytoplasm. The enzyme catalyses GTP + H2O = GDP + phosphate + H(+). Functionally, GTP hydrolase that promotes the GTP-dependent binding of aminoacyl-tRNA to the A-site of ribosomes during protein biosynthesis. The protein is Elongation factor Tu of Campylobacter concisus (strain 13826).